Consider the following 276-residue polypeptide: Homeobox-leucine zipper protein HOX22 (276 aa).

Positions 70 to 130 (AGERKRRFTE…NKRARWRSKQ (61 aa)) form a DNA-binding region, homeobox. The tract at residues 129 to 173 (KQLEHDYAALRSKYDALHSRVESLKQEKLALTVQLHELRERLRER) is leucine-zipper. Residues 170 to 212 (LREREERSGNGGAATTAASSSSCNGSGSEEVDDDDDKRNAAAG) are disordered. Residues 182–197 (AATTAASSSSCNGSGS) are compositionally biased toward low complexity.

The protein belongs to the HD-ZIP homeobox family. Class I subfamily. Expressed in seedlings, roots, stems, leaf sheaths and blades and panicles.

It is found in the nucleus. Probable transcription factor. In Oryza sativa subsp. japonica (Rice), this protein is Homeobox-leucine zipper protein HOX22 (HOX22).